A 217-amino-acid chain; its full sequence is D-methionine transport system permease protein MetI (217 aa).

Over 1-19 (MSEPMMWLLVRGVWETLAM) the chain is Periplasmic. The region spanning 13 to 204 (VWETLAMTFV…LLVILVYLIQ (192 aa)) is the ABC transmembrane type-1 domain. Residues 20–40 (TFVSGFFGFVIGLPVGVLLYV) form a helical membrane-spanning segment. Residues 41-57 (TRPGQIIANAKLYRTVS) are Cytoplasmic-facing. A helical membrane pass occupies residues 58–78 (AIVNIFRSIPFIILLVWMIPF). The Periplasmic segment spans residues 79-80 (TR). The helical transmembrane segment at 81–101 (VIVGTSIGLQAAIVPLTVGAA) threads the bilayer. Over 102 to 151 (PFIARMVENALLEIPTGLIEASRAMGATPMQIVRKVLLPEALPGLVNAAT) the chain is Cytoplasmic. The chain crosses the membrane as a helical span at residues 152–172 (ITLITLVGYSAMGGAVGAGGL). The Periplasmic portion of the chain corresponds to 173 to 185 (GQIGYQYGYIGYN). The chain crosses the membrane as a helical span at residues 186-206 (ATVMNTVLVLLVILVYLIQFA). At 207–217 (GDRIVRAVTRK) the chain is on the cytoplasmic side.

It belongs to the binding-protein-dependent transport system permease family. CysTW subfamily.

The protein resides in the cell inner membrane. Functionally, part of the binding-protein-dependent transport system for D-methionine and the toxic methionine analog alpha-methyl-methionine. Probably responsible for the translocation of the substrate across the membrane. (Microbial infection) Probably transports the toxic C-terminal region of CdiA from E.coli strain MHI813 across the inner membrane to the cytoplasm, where CdiA has a toxic effect. Toxin transport is strain-specific, mutations in this gene do not confer resistance to several other tested CdiA toxins. The sequence is that of D-methionine transport system permease protein MetI (metI) from Escherichia coli (strain K12).